The following is a 437-amino-acid chain: Trigger factor (437 aa).

In terms of domain architecture, PPIase FKBP-type spans 163–248 (GDIAVINFEG…LNQIKAKVLP (86 aa)).

The protein belongs to the FKBP-type PPIase family. Tig subfamily.

Its subcellular location is the cytoplasm. It carries out the reaction [protein]-peptidylproline (omega=180) = [protein]-peptidylproline (omega=0). In terms of biological role, involved in protein export. Acts as a chaperone by maintaining the newly synthesized protein in an open conformation. Functions as a peptidyl-prolyl cis-trans isomerase. The polypeptide is Trigger factor (Bdellovibrio bacteriovorus (strain ATCC 15356 / DSM 50701 / NCIMB 9529 / HD100)).